Here is a 289-residue protein sequence, read N- to C-terminus: MKLSFTKMHGAGNDFVVLDGYSHTLPPLTDVQVRALADRHFGIGADQLLVVEKPTVDGADFKYRIFNCDGGEVEHCGNGARCFVKFVTDRGLTDKRSVRVQVMKGLITLTMQDNGEVVVDMGAPVFEPAQVPFDASGLDGRTDGNDTLWPLDVGGATRWVSTVSMGNPHAVQVVDDAEAYPVLAEGPLIERHARFPKRVNAGFMQIVSRHEVKLRVYERGAGETLACGTGACAAVAAGIRRGLLDTPVTVHTHGGTLTISWDGAHDERAALTMAGPATTVFEGEIELNV.

Substrate is bound by residues asparagine 13, glutamine 47, and asparagine 67. The Proton donor role is filled by cysteine 76. Residues 77 to 78 (GN), asparagine 167, asparagine 200, and 218 to 219 (ER) contribute to the substrate site. Cysteine 227 (proton acceptor) is an active-site residue. 228 to 229 (GT) serves as a coordination point for substrate.

Belongs to the diaminopimelate epimerase family. As to quaternary structure, homodimer.

The protein localises to the cytoplasm. The catalysed reaction is (2S,6S)-2,6-diaminopimelate = meso-2,6-diaminopimelate. The protein operates within amino-acid biosynthesis; L-lysine biosynthesis via DAP pathway; DL-2,6-diaminopimelate from LL-2,6-diaminopimelate: step 1/1. Functionally, catalyzes the stereoinversion of LL-2,6-diaminopimelate (L,L-DAP) to meso-diaminopimelate (meso-DAP), a precursor of L-lysine and an essential component of the bacterial peptidoglycan. This chain is Diaminopimelate epimerase, found in Burkholderia vietnamiensis (strain G4 / LMG 22486) (Burkholderia cepacia (strain R1808)).